A 351-amino-acid polypeptide reads, in one-letter code: Probable dual-specificity RNA methyltransferase RlmN (351 aa).

E97 acts as the Proton acceptor in catalysis. In terms of domain architecture, Radical SAM core spans 103-337 (YDYGNTVCIS…VTVRKERGVD (235 aa)). Cysteines 110 and 342 form a disulfide. 3 residues coordinate [4Fe-4S] cluster: C117, C121, and C124. S-adenosyl-L-methionine contacts are provided by residues 166–167 (GE), S198, 221–223 (SLH), and N299. Residue C342 is the S-methylcysteine intermediate of the active site.

The protein belongs to the radical SAM superfamily. RlmN family. [4Fe-4S] cluster serves as cofactor.

Its subcellular location is the cytoplasm. The catalysed reaction is adenosine(2503) in 23S rRNA + 2 reduced [2Fe-2S]-[ferredoxin] + 2 S-adenosyl-L-methionine = 2-methyladenosine(2503) in 23S rRNA + 5'-deoxyadenosine + L-methionine + 2 oxidized [2Fe-2S]-[ferredoxin] + S-adenosyl-L-homocysteine. It carries out the reaction adenosine(37) in tRNA + 2 reduced [2Fe-2S]-[ferredoxin] + 2 S-adenosyl-L-methionine = 2-methyladenosine(37) in tRNA + 5'-deoxyadenosine + L-methionine + 2 oxidized [2Fe-2S]-[ferredoxin] + S-adenosyl-L-homocysteine. Specifically methylates position 2 of adenine 2503 in 23S rRNA and position 2 of adenine 37 in tRNAs. This chain is Probable dual-specificity RNA methyltransferase RlmN, found in Natranaerobius thermophilus (strain ATCC BAA-1301 / DSM 18059 / JW/NM-WN-LF).